The chain runs to 464 residues: Light-independent protochlorophyllide reductase subunit N (464 aa).

[4Fe-4S] cluster contacts are provided by Cys-29, Cys-54, and Cys-114.

This sequence belongs to the BchN/ChlN family. In terms of assembly, protochlorophyllide reductase is composed of three subunits; ChlL, ChlN and ChlB. Forms a heterotetramer of two ChlB and two ChlN subunits. Requires [4Fe-4S] cluster as cofactor.

It localises to the plastid. It is found in the chloroplast. It catalyses the reaction chlorophyllide a + oxidized 2[4Fe-4S]-[ferredoxin] + 2 ADP + 2 phosphate = protochlorophyllide a + reduced 2[4Fe-4S]-[ferredoxin] + 2 ATP + 2 H2O. It functions in the pathway porphyrin-containing compound metabolism; chlorophyll biosynthesis (light-independent). In terms of biological role, component of the dark-operative protochlorophyllide reductase (DPOR) that uses Mg-ATP and reduced ferredoxin to reduce ring D of protochlorophyllide (Pchlide) to form chlorophyllide a (Chlide). This reaction is light-independent. The NB-protein (ChlN-ChlB) is the catalytic component of the complex. The polypeptide is Light-independent protochlorophyllide reductase subunit N (Stigeoclonium helveticum (Green alga)).